The primary structure comprises 280 residues: 3,2-trans-enoyl-CoA isomerase (280 aa).

Substrate-binding positions include 68–72 (SGADF) and Leu-126. The active-site Proton donor/acceptor is the Glu-158. The Microbody targeting signal signature appears at 278-280 (HRL).

Belongs to the enoyl-CoA hydratase/isomerase family. As to quaternary structure, homohexamer, dimer of trimers. Interacts with DCI1.

The protein localises to the peroxisome. It carries out the reaction a (3Z)-enoyl-CoA = a 4-saturated (2E)-enoyl-CoA. The catalysed reaction is a (3E)-enoyl-CoA = a 4-saturated (2E)-enoyl-CoA. It functions in the pathway lipid metabolism; fatty acid beta-oxidation. In terms of biological role, essential for the beta oxidation of unsaturated fatty acids. The polypeptide is 3,2-trans-enoyl-CoA isomerase (ECI1) (Saccharomyces cerevisiae (strain ATCC 204508 / S288c) (Baker's yeast)).